Consider the following 177-residue polypeptide: Calerythrin (177 aa).

EF-hand domains are found at residues 5–40 (IASD…IAEA), 45–90 (AGAA…NLIF), 100–134 (VLGP…ALGM), and 134–169 (MSKA…FHFG). Positions 18, 20, 22, and 29 each coordinate Ca(2+). Positions 113, 115, 117, 119, 124, 147, 149, 151, 153, and 158 each coordinate Ca(2+).

The polypeptide is Calerythrin (Saccharopolyspora erythraea (Streptomyces erythraeus)).